The sequence spans 475 residues: uncharacterized protein (475 aa).

2 consecutive 4Fe-4S ferredoxin-type domains span residues 303–333 (ASEF…GHGY) and 352–381 (YKDF…LSKL). Residues Cys312, Cys315, Cys318, Cys322, Cys362, Cys365, Cys368, and Cys372 each coordinate [4Fe-4S] cluster.

The protein belongs to the LutB/YkgF family.

This is an uncharacterized protein from Escherichia coli (strain K12).